Here is a 169-residue protein sequence, read N- to C-terminus: Peptide methionine sulfoxide reductase MsrA (169 aa).

Cys10 is a catalytic residue.

It belongs to the MsrA Met sulfoxide reductase family.

It carries out the reaction L-methionyl-[protein] + [thioredoxin]-disulfide + H2O = L-methionyl-(S)-S-oxide-[protein] + [thioredoxin]-dithiol. The catalysed reaction is [thioredoxin]-disulfide + L-methionine + H2O = L-methionine (S)-S-oxide + [thioredoxin]-dithiol. Functionally, has an important function as a repair enzyme for proteins that have been inactivated by oxidation. Catalyzes the reversible oxidation-reduction of methionine sulfoxide in proteins to methionine. The polypeptide is Peptide methionine sulfoxide reductase MsrA (Streptococcus equi subsp. equi (strain 4047)).